The primary structure comprises 168 residues: Peptide deformylase 2 (168 aa).

Residues Cys91 and His133 each contribute to the Fe cation site. Glu134 is a catalytic residue. Residue His137 coordinates Fe cation.

This sequence belongs to the polypeptide deformylase family. Fe(2+) serves as cofactor.

The catalysed reaction is N-terminal N-formyl-L-methionyl-[peptide] + H2O = N-terminal L-methionyl-[peptide] + formate. In terms of biological role, removes the formyl group from the N-terminal Met of newly synthesized proteins. Requires at least a dipeptide for an efficient rate of reaction. N-terminal L-methionine is a prerequisite for activity but the enzyme has broad specificity at other positions. The protein is Peptide deformylase 2 of Vibrio vulnificus (strain CMCP6).